The primary structure comprises 458 residues: Sulfite exporter TauE/SafE family protein 2 (458 aa).

The next 12 helical transmembrane spans lie at phenylalanine 5–proline 25, isoleucine 53–serine 73, serine 74–leucine 94, serine 101–valine 121, glycine 128–valine 148, isoleucine 150–phenylalanine 170, phenylalanine 227–leucine 247, tyrosine 267–phenylalanine 287, valine 324–isoleucine 344, leucine 348–phenylalanine 368, glycine 386–valine 406, and isoleucine 418–glycine 438.

Belongs to the 4-toluene sulfonate uptake permease (TSUP) (TC 2.A.102) family.

The protein localises to the membrane. This is Sulfite exporter TauE/SafE family protein 2 from Arabidopsis thaliana (Mouse-ear cress).